The primary structure comprises 318 residues: Coproporphyrin III ferrochelatase (318 aa).

Fe(2+)-binding residues include His-186 and Glu-268.

It belongs to the ferrochelatase family.

It localises to the cytoplasm. It catalyses the reaction Fe-coproporphyrin III + 2 H(+) = coproporphyrin III + Fe(2+). The protein operates within porphyrin-containing compound metabolism; protoheme biosynthesis. Functionally, involved in coproporphyrin-dependent heme b biosynthesis. Catalyzes the insertion of ferrous iron into coproporphyrin III to form Fe-coproporphyrin III. The sequence is that of Coproporphyrin III ferrochelatase from Lactococcus lactis subsp. cremoris (strain MG1363).